Reading from the N-terminus, the 147-residue chain is Basic phospholipase A2 beta-bungarotoxin A2 chain (147 aa).

An N-terminal signal peptide occupies residues 1-19 (MYPAHLLVLSAVCVSLLGA). The propeptide occupies 20–27 (ANIPPYPL). Cystine bridges form between cysteine 54/cysteine 146, cysteine 56/cysteine 72, cysteine 71/cysteine 127, cysteine 78/cysteine 120, cysteine 88/cysteine 113, and cysteine 106/cysteine 118. Tyrosine 55, glycine 57, and glycine 59 together coordinate Ca(2+). Residue histidine 75 is part of the active site. Aspartate 76 provides a ligand contact to Ca(2+). Aspartate 121 is an active-site residue.

This sequence belongs to the phospholipase A2 family. Group I subfamily. D49 sub-subfamily. As to quaternary structure, heterodimer; disulfide-linked. The A chains have phospholipase A2 activity and the B chains show homology with the basic protease inhibitors. Ca(2+) serves as cofactor. Expressed by the venom gland.

It localises to the secreted. The catalysed reaction is a 1,2-diacyl-sn-glycero-3-phosphocholine + H2O = a 1-acyl-sn-glycero-3-phosphocholine + a fatty acid + H(+). In terms of biological role, snake venom phospholipase A2 (PLA2) that inhibits neuromuscular transmission by blocking acetylcholine release from the nerve termini. PLA2 catalyzes the calcium-dependent hydrolysis of the 2-acyl groups in 3-sn-phosphoglycerides. This is Basic phospholipase A2 beta-bungarotoxin A2 chain from Bungarus caeruleus (Indian krait).